Consider the following 128-residue polypeptide: Azurin (128 aa).

In terms of domain architecture, Plastocyanin-like spans 1–128 (ACDVSIEGND…IMKGTIELGS (128 aa)). Cys-2 and Cys-25 are joined by a disulfide. Cu cation is bound by residues His-45, Cys-111, His-116, and Met-120.

In terms of assembly, monomer. Interacts with the AAUA/AAUB heterotetramer complex. Cu cation serves as cofactor.

The protein resides in the periplasm. Transfers electrons from cytochrome c551 to cytochrome oxidase. Transfers electrons from the tryptophan tryptophylquinone of the aromatic amine dehydrogenase heterotetramer. The chain is Azurin from Alcaligenes faecalis.